The primary structure comprises 313 residues: tRNA (guanine-N(7)-)-methyltransferase (313 aa).

The S-adenosyl-L-methionine site is built by Glu33, Glu58, and Asp85. Residues Lys112, Asp144, and 177–180 (TRYE) each bind substrate.

It belongs to the class I-like SAM-binding methyltransferase superfamily. TrmB family.

It carries out the reaction guanosine(46) in tRNA + S-adenosyl-L-methionine = N(7)-methylguanosine(46) in tRNA + S-adenosyl-L-homocysteine. It participates in tRNA modification; N(7)-methylguanine-tRNA biosynthesis. In terms of biological role, catalyzes the formation of N(7)-methylguanine at position 46 (m7G46) in tRNA. The chain is tRNA (guanine-N(7)-)-methyltransferase from Thermotoga maritima (strain ATCC 43589 / DSM 3109 / JCM 10099 / NBRC 100826 / MSB8).